The primary structure comprises 235 residues: Voltage-gated hydrogen channel 1 (235 aa).

Residues 1–65 lie on the Cytoplasmic side of the membrane; sequence MSRYLKHFTA…SLRKLYSTER (65 aa). The helical transmembrane segment at 66 to 86 threads the bilayer; it reads FQIVVVCLVVLDAIFVLCELL. Residues 87–103 lie on the Extracellular side of the membrane; it reads IDLSIIEADHHRIAPQV. Residues 104 to 126 form a helical membrane-spanning segment; it reads FHYLSLALLTFFMVELAGKIFAY. Residues 127–134 lie on the Cytoplasmic side of the membrane; it reads RLEFLHHK. The helical transmembrane segment at 135–155 threads the bilayer; that stretch reads FEVFDGIVVVVSFILDIIYIS. At 156–162 the chain is on the extracellular side; the sequence is KEDAFDA. The chain crosses the membrane as a helical span at residues 163 to 183; it reads MGLLILLRLWRVARIINGILV. Topologically, residues 184-235 are cytoplasmic; sequence SVQNRANHRVEKLKEINESLVHQVNELKEQNTKMDQENVRLRALLKDHSIDF. Positions 187 to 231 form a coiled coil; sequence NRANHRVEKLKEINESLVHQVNELKEQNTKMDQENVRLRALLKDH.

It belongs to the hydrogen channel family. Homodimer.

It is found in the membrane. The protein resides in the cell membrane. In terms of biological role, mediates the voltage-dependent proton permeability of excitable membranes. Forms a proton-selective channel through which protons may pass in accordance with their electrochemical gradient. The polypeptide is Voltage-gated hydrogen channel 1 (hvcn1) (Danio rerio (Zebrafish)).